We begin with the raw amino-acid sequence, 164 residues long: UPF0303 protein RHE_CH02903 (164 aa).

This sequence belongs to the UPF0303 family.

The sequence is that of UPF0303 protein RHE_CH02903 from Rhizobium etli (strain ATCC 51251 / DSM 11541 / JCM 21823 / NBRC 15573 / CFN 42).